Reading from the N-terminus, the 312-residue chain is Serine/threonine-protein kinase ppk11 (312 aa).

The Protein kinase domain occupies 6-258 (YRDLQLIGQG…AEYLSKHKFI (253 aa)). ATP-binding positions include 12–20 (IGQGSFGSV) and Lys-35. Asp-127 acts as the Proton acceptor in catalysis.

Belongs to the protein kinase superfamily. Ser/Thr protein kinase family.

It localises to the cytoplasm. Its subcellular location is the nucleus. The catalysed reaction is L-seryl-[protein] + ATP = O-phospho-L-seryl-[protein] + ADP + H(+). It carries out the reaction L-threonyl-[protein] + ATP = O-phospho-L-threonyl-[protein] + ADP + H(+). The sequence is that of Serine/threonine-protein kinase ppk11 (ppk11) from Schizosaccharomyces pombe (strain 972 / ATCC 24843) (Fission yeast).